We begin with the raw amino-acid sequence, 207 residues long: 8-oxoguanine DNA glycosylase/AP lyase (207 aa).

Catalysis depends on residues Lys128 and Asp146.

This sequence belongs to the type-2 OGG1 family.

It carries out the reaction 2'-deoxyribonucleotide-(2'-deoxyribose 5'-phosphate)-2'-deoxyribonucleotide-DNA = a 3'-end 2'-deoxyribonucleotide-(2,3-dehydro-2,3-deoxyribose 5'-phosphate)-DNA + a 5'-end 5'-phospho-2'-deoxyribonucleoside-DNA + H(+). Its function is as follows. Catalyzes the excision of an oxidatively damaged form of guanine (7,8-dihydro-8-oxoguanine = 8-oxoG) from DNA. Also cleaves the DNA backbone at apurinic/apyrimidinic sites (AP sites). This Saccharolobus islandicus (strain Y.N.15.51 / Yellowstone #2) (Sulfolobus islandicus) protein is 8-oxoguanine DNA glycosylase/AP lyase.